The chain runs to 1199 residues: Putative pyruvate-flavodoxin oxidoreductase (1199 aa).

2 4Fe-4S ferredoxin-type domains span residues 681 to 710 and 737 to 766; these read EIPV…GKVY and FTIQ…QPRL. [4Fe-4S] cluster is bound by residues Cys690, Cys693, Cys696, Cys700, Cys746, Cys749, Cys752, Cys756, Cys820, Cys823, Cys848, and Cys1079.

Belongs to the pyruvate:ferredoxin/flavodoxin oxidoreductase family. Requires [4Fe-4S] cluster as cofactor.

It carries out the reaction oxidized [flavodoxin] + pyruvate + CoA + 2 H(+) = reduced [flavodoxin] + acetyl-CoA + CO2. In terms of biological role, oxidoreductase required for the transfer of electrons from pyruvate to flavodoxin. In Synechocystis sp. (strain ATCC 27184 / PCC 6803 / Kazusa), this protein is Putative pyruvate-flavodoxin oxidoreductase (nifJ).